The chain runs to 366 residues: Protein RecA (366 aa).

77 to 84 (GPESSGKT) is an ATP binding site. The interval 346-366 (IGGPGGEDDDAGGAAGVGDEA) is disordered.

Belongs to the RecA family.

Its subcellular location is the cytoplasm. In terms of biological role, can catalyze the hydrolysis of ATP in the presence of single-stranded DNA, the ATP-dependent uptake of single-stranded DNA by duplex DNA, and the ATP-dependent hybridization of homologous single-stranded DNAs. It interacts with LexA causing its activation and leading to its autocatalytic cleavage. The protein is Protein RecA of Rhodospirillum rubrum (strain ATCC 11170 / ATH 1.1.1 / DSM 467 / LMG 4362 / NCIMB 8255 / S1).